A 2078-amino-acid chain; its full sequence is Nascent polypeptide-associated complex subunit alpha, muscle-specific form (2078 aa).

Disordered regions lie at residues 1 to 21 (MPGE…QPQA), 37 to 96 (ALGQ…LGTA), 595 to 614 (LGEP…PLGV), and 732 to 1944 (KSVP…KAMS). 2 stretches are compositionally biased toward polar residues: residues 9 to 21 (VPAT…QPQA) and 60 to 75 (AANQ…TIAS). Positions 775–786 (SGASATASSKGT) are enriched in low complexity. Residues 837 to 847 (PENSLSFQGSK) show a composition bias toward polar residues. Serine 917 bears the Phosphoserine mark. Positions 933–1020 (SPSPKGAPTP…PPAVTPPSPK (88 aa)) are enriched in pro residues. Positions 1045 to 1067 (GSPAATPLPKGAPTTPAATLPSP) are enriched in low complexity. Residues 1080-1113 (PTPPAATPPSPKGGPATPSPKGAPMPPAATPPSP) show a composition bias toward pro residues. Low complexity predominate over residues 1114 to 1130 (KGGLATPPHKGAPTTPA). 2 stretches are compositionally biased toward pro residues: residues 1131–1147 (ATPP…PPKG) and 1154–1170 (ATPP…PPKG). Phosphoserine is present on serine 1181. 3 stretches are compositionally biased toward low complexity: residues 1183–1199 (KGGL…TTPA), 1206–1222 (KGGL…TTPA), and 1229–1245 (KGGL…TTPA). 2 stretches are compositionally biased toward pro residues: residues 1246–1270 (ATPP…PAAT) and 1292–1344 (VTPP…PSPK). The span at 1345-1366 (GTPTLPATTPSSKGGPTTPSSK) shows a compositional bias: low complexity. Serine 1397 and serine 1474 each carry phosphoserine. Pro residues predominate over residues 1470–1481 (VTPPSPKEPPAP). The segment covering 1485–1507 (ATSSSPKKAPATPAPMGAPTLPA) has biased composition (low complexity). Residues 1611-1625 (KEAPTPPAVTPPSPE) show a composition bias toward pro residues. A compositionally biased stretch (low complexity) spans 1626–1637 (KGPATPAPKGTP). A compositionally biased stretch (polar residues) spans 1647 to 1656 (LKDSPTSPAS). Residues 1744–1756 (DSSKTAKGKDASH) are compositionally biased toward basic and acidic residues. Over residues 1794–1811 (PSPPVSLPLAPSPVPTLP) the composition is skewed to pro residues. The PXLXP motif lies at 1841 to 1845 (LPLIP). Residues 1876-1891 (SAKQPVTKNNKGSGTE) show a composition bias toward polar residues. Over residues 1892–1905 (SDSDESVPELEEQD) the composition is skewed to acidic residues. Residue serine 1906 is modified to Phosphoserine; by ILK1. Positions 1907–1920 (TQATTQQAQLAAAA) are enriched in low complexity. The segment at 1932–1943 (QSRSEKKARKAM) is required for DNA-binding. Positions 1933 to 1998 (SRSEKKARKA…AKIEDLSQQA (66 aa)) constitute an NAC-A/B domain. At serine 1995 the chain carries Phosphoserine. At lysine 2005 the chain carries N6-acetyllysine; alternate. Lysine 2005 participates in a covalent cross-link: Glycyl lysine isopeptide (Lys-Gly) (interchain with G-Cter in SUMO2); alternate. Threonine 2022 is subject to Phosphothreonine; by GSK3-beta. Threonine 2024 carries the post-translational modification Phosphothreonine. Phosphoserine occurs at positions 2029, 2049, 2054, and 2066. A UBA domain is found at 2039-2078 (VEVKDIELVMSQANVSRAKAVRALKNNSNDIVNAIMELTM).

Interacts (via PXLXP motif) with the muscle-restricted histone methyltransferase SMYD1 (via MYND-type zinc finger).

Its subcellular location is the cytoplasm. The protein resides in the nucleus. In terms of biological role, cardiac- and muscle-specific transcription factor. May act to regulate the expression of genes involved in the development of myotubes. Plays a critical role in ventricular cardiomyocyte expansion and regulates postnatal skeletal muscle growth and regeneration. Involved in the organized assembly of thick and thin filaments of myofibril sarcomeres. The sequence is that of Nascent polypeptide-associated complex subunit alpha, muscle-specific form (NACA) from Homo sapiens (Human).